The following is a 41-amino-acid chain: GVDKAGCRYMFGGCSVNDDCCPRLGCHSLFSYCAWDLTFSD.

Intrachain disulfides connect Cys-7–Cys-21, Cys-14–Cys-26, and Cys-20–Cys-33.

Belongs to the neurotoxin 10 (Hwtx-1) family. 56 (SNX-482) subfamily. Expressed by the venom gland.

The protein localises to the secreted. Functionally, toxin that blocks vertebrate P/Q-type (Cav2.1/CACNA1A) and R-type (Cav2.3/CACNA1E) voltage-gated calcium channels. Also inhibits sodium channels (Nav) in bovine chromaffin cells by delaying sodium channel inactivation. In Hysterocrates gigas (Cameroon red baboon tarantula), this protein is Omega-theraphotoxin-Hg1a.